The chain runs to 702 residues: Ribosomal RNA large subunit methyltransferase K/L (702 aa).

The 112-residue stretch at 43-154 (LVYQSLMWSR…KETASIALDL (112 aa)) folds into the THUMP domain.

This sequence belongs to the methyltransferase superfamily. RlmKL family.

The protein localises to the cytoplasm. It carries out the reaction guanosine(2445) in 23S rRNA + S-adenosyl-L-methionine = N(2)-methylguanosine(2445) in 23S rRNA + S-adenosyl-L-homocysteine + H(+). It catalyses the reaction guanosine(2069) in 23S rRNA + S-adenosyl-L-methionine = N(2)-methylguanosine(2069) in 23S rRNA + S-adenosyl-L-homocysteine + H(+). Its function is as follows. Specifically methylates the guanine in position 2445 (m2G2445) and the guanine in position 2069 (m7G2069) of 23S rRNA. The chain is Ribosomal RNA large subunit methyltransferase K/L from Shigella sonnei (strain Ss046).